An 892-amino-acid chain; its full sequence is Translation initiation factor IF-2 (892 aa).

Basic and acidic residues predominate over residues 138–185 (QRNLAEQQRLAEVDRQRVEEQERKRREEEQAELERQKTESRVVEEILV). 2 disordered regions span residues 138–250 (QRNL…EDDS) and 262–298 (AAERARRGSNTRGKGGGSHRSATHRGNENSIRSSGAH). The span at 207-219 (LPRTVRPTPAARP) shows a compositional bias: low complexity. The tr-type G domain maps to 391–560 (PRPPVVTIMG…SIQAEVLELK (170 aa)). GTP contacts are provided by residues 400–407 (GHVDHGKT), 446–450 (DTPGH), and 500–503 (SKID).

Belongs to the TRAFAC class translation factor GTPase superfamily. Classic translation factor GTPase family. IF-2 subfamily.

It is found in the cytoplasm. Its function is as follows. One of the essential components for the initiation of protein synthesis. Protects formylmethionyl-tRNA from spontaneous hydrolysis and promotes its binding to the 30S ribosomal subunits. Also involved in the hydrolysis of GTP during the formation of the 70S ribosomal complex. This Xylella fastidiosa (strain Temecula1 / ATCC 700964) protein is Translation initiation factor IF-2.